The chain runs to 46 residues: MQEQKFRILTINPGSTSTKIGVFENERAIVEKTIRHEGRCFGNIKR.

This sequence belongs to the acetokinase family.

The protein resides in the cytoplasm. The enzyme catalyses butanoate + ATP = butanoyl phosphate + ADP. The sequence is that of Probable butyrate kinase (buk) from Geobacillus stearothermophilus (Bacillus stearothermophilus).